Reading from the N-terminus, the 371-residue chain is Diguanylate cyclase A (371 aa).

In terms of domain architecture, GGDEF spans glutamate 233–asparagine 366. Positions 241, 242, and 284 each coordinate Mg(2+). Glutamate 284 serves as the catalytic Proton acceptor.

In terms of assembly, exists as a homodimer and as larger aggregates. Both dimers and aggregates possess DGC activity. Requires Mg(2+) as cofactor. Mn(2+) is required as a cofactor.

It localises to the cytoplasm. It catalyses the reaction 2 GTP = 3',3'-c-di-GMP + 2 diphosphate. With respect to regulation, allosterically regulated by a feedback inhibition loop. Catalyzes the conversion of GTP to cyclic-di-GMP (c-di-GMP). Shows activity under aerobic and anaerobic reaction conditions. This Treponema denticola (strain ATCC 35405 / DSM 14222 / CIP 103919 / JCM 8153 / KCTC 15104) protein is Diguanylate cyclase A.